A 40-amino-acid polypeptide reads, in one-letter code: Natriuretic peptide PtNP-a (40 aa).

Cys-9 and Cys-25 are disulfide-bonded. Residues 17-34 (ISNTSGMGCRNPIQNRPK) show a composition bias toward polar residues. The segment at 17 to 40 (ISNTSGMGCRNPIQNRPKSTPGGS) is disordered.

Belongs to the natriuretic peptide family. Expressed by the venom gland.

It localises to the secreted. Its function is as follows. Snake venom natriuretic peptide that targets NPR1 and possibly NPR2. Exhibits hypotensive and vasodepressor activities. Recombinant PtNP-a demonstrates a dose-dependent stimulation of cGMP production via the natriuretic peptide receptor 1 (NPR1) (EC(50)=563 nM) in Madine Darby Canine Kidney (MDCK) cells. It also inhibits the angiotensin converting enzyme (ACE). The protein is Natriuretic peptide PtNP-a of Pseudonaja textilis (Eastern brown snake).